The primary structure comprises 670 residues: C6 finger domain transcription factor iacK (670 aa).

A disordered region spans residues 1–84 (MNTSPDYAQP…GEPKQSGPTV (84 aa)). A compositionally biased stretch (pro residues) spans 44–54 (GPPPPPPPPPT). The segment covering 55 to 74 (ATATAATAAATTTTAAPSAT) has biased composition (low complexity). Positions 88-114 (CLACRSKHLKCDGGNPCARCQASESIC) form a DNA-binding region, zn(2)-C6 fungal-type. A disordered region spans residues 122–157 (GYKGPRRNGTQNPNKRHAAASDDGSPNSNGSNESCP). Positions 142 to 155 (SDDGSPNSNGSNES) are enriched in low complexity.

Its subcellular location is the nucleus. In terms of biological role, transcription factor; part of the gene cluster that mediates the biosynthesis of iso-A82775C, a enylepoxycyclohexane and biosynthetic precursor of the chloropestolide anticancer natural products. In Pestalotiopsis fici (strain W106-1 / CGMCC3.15140), this protein is C6 finger domain transcription factor iacK.